We begin with the raw amino-acid sequence, 187 residues long: Adenylate kinase (187 aa).

An ATP-binding site is contributed by 11-16; the sequence is GAGKGT. The segment at 31–60 is NMP; that stretch reads STGDILREAVKNQTAMGIEAKRYMDAGDLV. Residues Thr32, Arg37, 58 to 60, 86 to 89, and Gln93 contribute to the AMP site; these read DLV and GFPR. Residues 127 to 137 form an LID region; sequence GRAEIEGRADD. Arg128 is an ATP binding site. Positions 134 and 145 each coordinate AMP. Gly173 is a binding site for ATP.

The protein belongs to the adenylate kinase family. In terms of assembly, monomer.

It is found in the cytoplasm. The enzyme catalyses AMP + ATP = 2 ADP. It participates in purine metabolism; AMP biosynthesis via salvage pathway; AMP from ADP: step 1/1. Its function is as follows. Catalyzes the reversible transfer of the terminal phosphate group between ATP and AMP. Plays an important role in cellular energy homeostasis and in adenine nucleotide metabolism. This Leptospira interrogans serogroup Icterohaemorrhagiae serovar copenhageni (strain Fiocruz L1-130) protein is Adenylate kinase.